The sequence spans 546 residues: Glucose-6-phosphate isomerase (546 aa).

The active-site Proton donor is E355. Residues H386 and K510 contribute to the active site.

It belongs to the GPI family.

The protein resides in the cytoplasm. It catalyses the reaction alpha-D-glucose 6-phosphate = beta-D-fructose 6-phosphate. It participates in carbohydrate biosynthesis; gluconeogenesis. The protein operates within carbohydrate degradation; glycolysis; D-glyceraldehyde 3-phosphate and glycerone phosphate from D-glucose: step 2/4. In terms of biological role, catalyzes the reversible isomerization of glucose-6-phosphate to fructose-6-phosphate. The chain is Glucose-6-phosphate isomerase from Buchnera aphidicola subsp. Cinara cedri (strain Cc).